A 442-amino-acid polypeptide reads, in one-letter code: UDP-glycosyltransferase 79B7 (442 aa).

Residues Ser-260, 319–321, 336–344, and 358–361 contribute to the UDP-alpha-D-glucose site; these read VQQ, HCGPGTIWE, and LSDQ.

This sequence belongs to the UDP-glycosyltransferase family.

This chain is UDP-glycosyltransferase 79B7 (UGT79B7), found in Arabidopsis thaliana (Mouse-ear cress).